The sequence spans 361 residues: Phosphoserine aminotransferase (361 aa).

An L-glutamate-binding site is contributed by arginine 42. Residues 76 to 77 (GR), tryptophan 102, threonine 154, aspartate 173, and glutamine 196 each bind pyridoxal 5'-phosphate. Position 197 is an N6-(pyridoxal phosphate)lysine (lysine 197). Position 238–239 (238–239 (NT)) interacts with pyridoxal 5'-phosphate.

It belongs to the class-V pyridoxal-phosphate-dependent aminotransferase family. SerC subfamily. Homodimer. Pyridoxal 5'-phosphate is required as a cofactor.

Its subcellular location is the cytoplasm. It catalyses the reaction O-phospho-L-serine + 2-oxoglutarate = 3-phosphooxypyruvate + L-glutamate. It carries out the reaction 4-(phosphooxy)-L-threonine + 2-oxoglutarate = (R)-3-hydroxy-2-oxo-4-phosphooxybutanoate + L-glutamate. Its pathway is amino-acid biosynthesis; L-serine biosynthesis; L-serine from 3-phospho-D-glycerate: step 2/3. It functions in the pathway cofactor biosynthesis; pyridoxine 5'-phosphate biosynthesis; pyridoxine 5'-phosphate from D-erythrose 4-phosphate: step 3/5. In terms of biological role, catalyzes the reversible conversion of 3-phosphohydroxypyruvate to phosphoserine and of 3-hydroxy-2-oxo-4-phosphonooxybutanoate to phosphohydroxythreonine. This Idiomarina loihiensis (strain ATCC BAA-735 / DSM 15497 / L2-TR) protein is Phosphoserine aminotransferase.